Here is a 279-residue protein sequence, read N- to C-terminus: MRDRLFSIIYKYNLHPNRDLGQNFLIVPDIIERNIERAEVGEKDTVLEIGPGLGVLTDPLSKRAGKVYAIEKDCRIVEILRREYNWPNVEIIEGDALKVEWPEFNKMVSNLPYQISSPVTFKLLSREFERAVLIFQLEFAERMVAKPGDKNYSRLSLMVRAKARAELVERIGKGAFWPRPKVDSAVVVLEPKPPEERIDLNENLVKALFQHRRSTVSAALKKSAHMLGLSKDKARELRQVFSRVPHSERRVFQLSPEDVLEIEEFLKKEGVIESYPASP.

S-adenosyl-L-methionine contacts are provided by Asn-23, Leu-25, Gly-50, Glu-71, Asp-95, and Asn-110.

It belongs to the class I-like SAM-binding methyltransferase superfamily. rRNA adenine N(6)-methyltransferase family. RsmA subfamily.

It is found in the cytoplasm. Specifically dimethylates two adjacent adenosines in the loop of a conserved hairpin near the 3'-end of 16S rRNA in the 30S particle. May play a critical role in biogenesis of 30S subunits. In Thermococcus kodakarensis (strain ATCC BAA-918 / JCM 12380 / KOD1) (Pyrococcus kodakaraensis (strain KOD1)), this protein is Probable ribosomal RNA small subunit methyltransferase A.